The primary structure comprises 91 residues: DNA-directed RNA polymerase subunit omega (91 aa).

It belongs to the RNA polymerase subunit omega family. As to quaternary structure, the RNAP catalytic core consists of 2 alpha, 1 beta, 1 beta' and 1 omega subunit. When a sigma factor is associated with the core the holoenzyme is formed, which can initiate transcription.

It carries out the reaction RNA(n) + a ribonucleoside 5'-triphosphate = RNA(n+1) + diphosphate. Functionally, promotes RNA polymerase assembly. Latches the N- and C-terminal regions of the beta' subunit thereby facilitating its interaction with the beta and alpha subunits. The chain is DNA-directed RNA polymerase subunit omega from Erwinia tasmaniensis (strain DSM 17950 / CFBP 7177 / CIP 109463 / NCPPB 4357 / Et1/99).